The primary structure comprises 229 residues: DNA mismatch repair protein MutH (229 aa).

The protein belongs to the MutH family.

The protein resides in the cytoplasm. Its function is as follows. Sequence-specific endonuclease that cleaves unmethylated GATC sequences. It is involved in DNA mismatch repair. The sequence is that of DNA mismatch repair protein MutH from Shigella dysenteriae serotype 1 (strain Sd197).